Here is a 304-residue protein sequence, read N- to C-terminus: Dihydroorotate dehydrogenase B (NAD(+)), catalytic subunit (304 aa).

Residues S22 and 46–47 (KA) contribute to the FMN site. Residues K46 and 70–74 (NAIGL) each bind substrate. FMN-binding residues include N100 and N128. N128 contributes to the substrate binding site. C131 (nucleophile) is an active-site residue. K166 and I192 together coordinate FMN. 193–194 (NT) contributes to the substrate binding site. FMN is bound by residues G218, 244 to 245 (GG), and 266 to 267 (GT).

It belongs to the dihydroorotate dehydrogenase family. Type 1 subfamily. In terms of assembly, heterotetramer of 2 PyrK and 2 PyrD type B subunits. FMN serves as cofactor.

Its subcellular location is the cytoplasm. The enzyme catalyses (S)-dihydroorotate + NAD(+) = orotate + NADH + H(+). It participates in pyrimidine metabolism; UMP biosynthesis via de novo pathway; orotate from (S)-dihydroorotate (NAD(+) route): step 1/1. Functionally, catalyzes the conversion of dihydroorotate to orotate with NAD(+) as electron acceptor. In Fusobacterium nucleatum subsp. nucleatum (strain ATCC 25586 / DSM 15643 / BCRC 10681 / CIP 101130 / JCM 8532 / KCTC 2640 / LMG 13131 / VPI 4355), this protein is Dihydroorotate dehydrogenase B (NAD(+)), catalytic subunit (pyrD).